Reading from the N-terminus, the 486-residue chain is Galactose-1-phosphate uridylyltransferase (486 aa).

Belongs to the galactose-1-phosphate uridylyltransferase type 2 family.

It is found in the cytoplasm. It carries out the reaction alpha-D-galactose 1-phosphate + UDP-alpha-D-glucose = alpha-D-glucose 1-phosphate + UDP-alpha-D-galactose. It participates in carbohydrate metabolism; galactose metabolism. The sequence is that of Galactose-1-phosphate uridylyltransferase from Lacticaseibacillus casei (strain BL23) (Lactobacillus casei).